The sequence spans 337 residues: D-alanine--D-alanine ligase (337 aa).

Positions 126–326 constitute an ATP-grasp domain; it reads KQIWISNGLS…YADLVLWLLS (201 aa). An ATP-binding site is contributed by 152–207; it reads VKHLGLPLIVKPAHEGSSLGLTKVKSVEELPAAYQLAAGLDKKVIAETCIVGDELT. Residues aspartate 279, glutamate 293, and asparagine 295 each contribute to the Mg(2+) site.

It belongs to the D-alanine--D-alanine ligase family. The cofactor is Mg(2+). Mn(2+) serves as cofactor.

The protein localises to the cytoplasm. It catalyses the reaction 2 D-alanine + ATP = D-alanyl-D-alanine + ADP + phosphate + H(+). It functions in the pathway cell wall biogenesis; peptidoglycan biosynthesis. Functionally, cell wall formation. This is D-alanine--D-alanine ligase from Polynucleobacter asymbioticus (strain DSM 18221 / CIP 109841 / QLW-P1DMWA-1) (Polynucleobacter necessarius subsp. asymbioticus).